A 187-amino-acid chain; its full sequence is Large ribosomal subunit protein uL6 (187 aa).

The tract at residues 159-187 (PYKGKGIRYKGEQLSSNPERLQVRSKEVR) is disordered.

This sequence belongs to the universal ribosomal protein uL6 family. As to quaternary structure, part of the 50S ribosomal subunit.

This protein binds to the 23S rRNA, and is important in its secondary structure. It is located near the subunit interface in the base of the L7/L12 stalk, and near the tRNA binding site of the peptidyltransferase center. The sequence is that of Large ribosomal subunit protein uL6 from Aquifex pyrophilus.